Consider the following 90-residue polypeptide: Beta-microseminoprotein (90 aa).

5 disulfides stabilise this stretch: Cys-2–Cys-16, Cys-34–Cys-70, Cys-37–Cys-46, Cys-39–Cys-47, and Cys-61–Cys-84. Position 90 is a valine amide (Val-90).

The protein belongs to the beta-microseminoprotein family.

The protein resides in the secreted. The sequence is that of Beta-microseminoprotein (MSMB) from Struthio camelus (Common ostrich).